A 390-amino-acid chain; its full sequence is 2-oxoisovalerate dehydrogenase subunit beta, mitochondrial (390 aa).

The N-terminal 48 residues, 1–48, are a transit peptide targeting the mitochondrion; it reads MAAVAARAGGLLWLRAAGAERRRCGLRCAALVQGFLQPGGEDTAQKRR. Tyr-150 provides a ligand contact to thiamine diphosphate. Residues Gly-176, Leu-178, Thr-179, Cys-226, and Asp-229 each coordinate K(+). At Lys-230 the chain carries N6-acetyllysine. Asn-231 contacts K(+). Lys-239 carries the post-translational modification N6-acetyllysine.

As to quaternary structure, heterotetramer of 2 alpha/BCKDHA and 2 beta chains/BCKDHB that forms the branched-chain alpha-keto acid decarboxylase (E1) component of the BCKD complex. The branched-chain alpha-ketoacid dehydrogenase is a large complex composed of three major building blocks E1, E2 and E3. It is organized around E2, a 24-meric cubic core composed of DBT, to which are associated 6 to 12 copies of E1, and approximately 6 copies of the dehydrogenase E3, a DLD dimer. Thiamine diphosphate is required as a cofactor.

The protein localises to the mitochondrion matrix. The catalysed reaction is N(6)-[(R)-lipoyl]-L-lysyl-[protein] + 3-methyl-2-oxobutanoate + H(+) = N(6)-[(R)-S(8)-2-methylpropanoyldihydrolipoyl]-L-lysyl-[protein] + CO2. Together with BCKDHA forms the heterotetrameric E1 subunit of the mitochondrial branched-chain alpha-ketoacid dehydrogenase (BCKD) complex. The BCKD complex catalyzes the multi-step oxidative decarboxylation of alpha-ketoacids derived from the branched-chain amino-acids valine, leucine and isoleucine producing CO2 and acyl-CoA which is subsequently utilized to produce energy. The E1 subunit catalyzes the first step with the decarboxylation of the alpha-ketoacid forming an enzyme-product intermediate. A reductive acylation mediated by the lipoylamide cofactor of E2 extracts the acyl group from the E1 active site for the next step of the reaction. This Mus musculus (Mouse) protein is 2-oxoisovalerate dehydrogenase subunit beta, mitochondrial.